The chain runs to 1342 residues: DNA-directed RNA polymerase subunit beta (1342 aa).

The protein belongs to the RNA polymerase beta chain family. The RNAP catalytic core consists of 2 alpha, 1 beta, 1 beta' and 1 omega subunit. When a sigma factor is associated with the core the holoenzyme is formed, which can initiate transcription.

It carries out the reaction RNA(n) + a ribonucleoside 5'-triphosphate = RNA(n+1) + diphosphate. In terms of biological role, DNA-dependent RNA polymerase catalyzes the transcription of DNA into RNA using the four ribonucleoside triphosphates as substrates. In Wigglesworthia glossinidia brevipalpis, this protein is DNA-directed RNA polymerase subunit beta.